Reading from the N-terminus, the 342-residue chain is 4-amino-5-hydroxymethyl-2-methylpyrimidine phosphate synthase (342 aa).

Lys62 carries the N6-(pyridoxal phosphate)lysine modification. His66 is a catalytic residue. 115-118 lines the pyridoxal 5'-phosphate pocket; it reads GEFG. Positions 195–199 match the CCCFC; essential for catalytic activity, may be the site of iron coordination motif; the sequence is CCCFC.

This sequence belongs to the NMT1/THI5 family. Homodimer. It depends on Fe cation as a cofactor.

The enzyme catalyses N(6)-(pyridoxal phosphate)-L-lysyl-[4-amino-5-hydroxymethyl-2-methylpyrimidine phosphate synthase] + L-histidyl-[4-amino-5-hydroxymethyl-2-methylpyrimidine phosphate synthase] + 2 Fe(3+) + 4 H2O = L-lysyl-[4-amino-5-hydroxymethyl-2-methylpyrimidine phosphate synthase] + (2S)-2-amino-5-hydroxy-4-oxopentanoyl-[4-amino-5-hydroxymethyl-2-methylpyrimidine phosphate synthase] + 4-amino-2-methyl-5-(phosphooxymethyl)pyrimidine + 3-oxopropanoate + 2 Fe(2+) + 2 H(+). The protein operates within cofactor biosynthesis; thiamine diphosphate biosynthesis. Functionally, responsible for the formation of the pyrimidine heterocycle in the thiamine biosynthesis pathway. Catalyzes the formation of hydroxymethylpyrimidine phosphate (HMP-P) from histidine and pyridoxal phosphate (PLP). The protein uses PLP and the active site histidine to form HMP-P, generating an inactive enzyme. The enzyme can only undergo a single turnover, which suggests it is a suicide enzyme. This Aspergillus parasiticus protein is 4-amino-5-hydroxymethyl-2-methylpyrimidine phosphate synthase.